Reading from the N-terminus, the 159-residue chain is RNA pyrophosphohydrolase (159 aa).

A Nudix hydrolase domain is found at Gly6–Lys149. A Nudix box motif is present at residues Gly38–Gly59.

This sequence belongs to the Nudix hydrolase family. RppH subfamily. A divalent metal cation serves as cofactor.

Its function is as follows. Accelerates the degradation of transcripts by removing pyrophosphate from the 5'-end of triphosphorylated RNA, leading to a more labile monophosphorylated state that can stimulate subsequent ribonuclease cleavage. This Baumannia cicadellinicola subsp. Homalodisca coagulata protein is RNA pyrophosphohydrolase.